Consider the following 74-residue polypeptide: uncharacterized protein (74 aa).

The helical transmembrane segment at 54–72 (LIIPRFLLLIYSVIQCLFL) threads the bilayer.

It is found in the membrane. This is an uncharacterized protein from Saccharomyces cerevisiae (strain ATCC 204508 / S288c) (Baker's yeast).